A 276-amino-acid polypeptide reads, in one-letter code: Biotin synthase (276 aa).

The Radical SAM core domain maps to 1–226 (MKKIYLCAIS…EAIIMLAGGR (226 aa)). [4Fe-4S] cluster is bound by residues Cys17, Cys21, and Cys24. Residues Cys61, Cys95, and Cys153 each coordinate [2Fe-2S] cluster.

This sequence belongs to the radical SAM superfamily. Biotin synthase family. As to quaternary structure, homodimer. Requires [4Fe-4S] cluster as cofactor. It depends on [2Fe-2S] cluster as a cofactor.

It catalyses the reaction (4R,5S)-dethiobiotin + (sulfur carrier)-SH + 2 reduced [2Fe-2S]-[ferredoxin] + 2 S-adenosyl-L-methionine = (sulfur carrier)-H + biotin + 2 5'-deoxyadenosine + 2 L-methionine + 2 oxidized [2Fe-2S]-[ferredoxin]. It participates in cofactor biosynthesis; biotin biosynthesis; biotin from 7,8-diaminononanoate: step 2/2. Functionally, catalyzes the conversion of dethiobiotin (DTB) to biotin by the insertion of a sulfur atom into dethiobiotin via a radical-based mechanism. The polypeptide is Biotin synthase (Nautilia profundicola (strain ATCC BAA-1463 / DSM 18972 / AmH)).